We begin with the raw amino-acid sequence, 729 residues long: Phosphoribosylformylglycinamidine synthase subunit PurL (729 aa).

His54 is a catalytic residue. Positions 57 and 96 each coordinate ATP. Residue Glu98 coordinates Mg(2+). Substrate is bound by residues Ser99–His102 and Arg121. The Proton acceptor role is filled by His100. Asp122 serves as a coordination point for Mg(2+). Substrate is bound at residue Gln245. Asp273 serves as a coordination point for Mg(2+). Residue Glu317–Gln319 participates in substrate binding. ATP is bound by residues Asp495 and Gly532. Asn533 serves as a coordination point for Mg(2+). Ser535 is a substrate binding site.

The protein belongs to the FGAMS family. Monomer. Part of the FGAM synthase complex composed of 1 PurL, 1 PurQ and 2 PurS subunits.

The protein resides in the cytoplasm. It carries out the reaction N(2)-formyl-N(1)-(5-phospho-beta-D-ribosyl)glycinamide + L-glutamine + ATP + H2O = 2-formamido-N(1)-(5-O-phospho-beta-D-ribosyl)acetamidine + L-glutamate + ADP + phosphate + H(+). It functions in the pathway purine metabolism; IMP biosynthesis via de novo pathway; 5-amino-1-(5-phospho-D-ribosyl)imidazole from N(2)-formyl-N(1)-(5-phospho-D-ribosyl)glycinamide: step 1/2. In terms of biological role, part of the phosphoribosylformylglycinamidine synthase complex involved in the purines biosynthetic pathway. Catalyzes the ATP-dependent conversion of formylglycinamide ribonucleotide (FGAR) and glutamine to yield formylglycinamidine ribonucleotide (FGAM) and glutamate. The FGAM synthase complex is composed of three subunits. PurQ produces an ammonia molecule by converting glutamine to glutamate. PurL transfers the ammonia molecule to FGAR to form FGAM in an ATP-dependent manner. PurS interacts with PurQ and PurL and is thought to assist in the transfer of the ammonia molecule from PurQ to PurL. The polypeptide is Phosphoribosylformylglycinamidine synthase subunit PurL (Staphylococcus epidermidis (strain ATCC 12228 / FDA PCI 1200)).